The sequence spans 234 residues: Sugar fermentation stimulation protein homolog (234 aa).

This sequence belongs to the SfsA family.

This Pectobacterium carotovorum subsp. carotovorum (strain PC1) protein is Sugar fermentation stimulation protein homolog.